We begin with the raw amino-acid sequence, 207 residues long: Small ribosomal subunit protein uS4 (207 aa).

The disordered stretch occupies residues 31-51; the sequence is KCKLDSKPGQHGRTSGARTSD. One can recognise an S4 RNA-binding domain in the interval 97-162; it reads SRLDNVVYRM…QGRIRESLDL (66 aa).

Belongs to the universal ribosomal protein uS4 family. Part of the 30S ribosomal subunit. Contacts protein S5. The interaction surface between S4 and S5 is involved in control of translational fidelity.

In terms of biological role, one of the primary rRNA binding proteins, it binds directly to 16S rRNA where it nucleates assembly of the body of the 30S subunit. Functionally, with S5 and S12 plays an important role in translational accuracy. This Bordetella bronchiseptica (strain ATCC BAA-588 / NCTC 13252 / RB50) (Alcaligenes bronchisepticus) protein is Small ribosomal subunit protein uS4.